We begin with the raw amino-acid sequence, 192 residues long: Cytidylate kinase (192 aa).

7 to 15 (GPPGSGKST) is an ATP binding site.

The protein belongs to the cytidylate kinase family. Type 2 subfamily.

The protein localises to the cytoplasm. The catalysed reaction is CMP + ATP = CDP + ADP. It carries out the reaction dCMP + ATP = dCDP + ADP. This is Cytidylate kinase from Halobacterium salinarum (strain ATCC 29341 / DSM 671 / R1).